A 343-amino-acid polypeptide reads, in one-letter code: NADH-ubiquinone oxidoreductase chain 1 (343 aa).

8 helical membrane-spanning segments follow: residues 4-24 (LISI…VAFL), 70-90 (ANII…LLGY), 106-126 (LGIL…LLAG), 154-174 (FYIL…IIES), 177-197 (VVYF…GCIA), 224-244 (VIFM…ICIL), 278-298 (GLSS…FIWV), and 316-336 (TILL…VIGL).

Belongs to the complex I subunit 1 family.

It localises to the mitochondrion inner membrane. It catalyses the reaction a ubiquinone + NADH + 5 H(+)(in) = a ubiquinol + NAD(+) + 4 H(+)(out). In terms of biological role, core subunit of the mitochondrial membrane respiratory chain NADH dehydrogenase (Complex I) that is believed to belong to the minimal assembly required for catalysis. Complex I functions in the transfer of electrons from NADH to the respiratory chain. The immediate electron acceptor for the enzyme is believed to be ubiquinone. The protein is NADH-ubiquinone oxidoreductase chain 1 (ND1) of Trichophyton rubrum (Athlete's foot fungus).